We begin with the raw amino-acid sequence, 406 residues long: Cysteine desulfurase (406 aa).

Residue K226 is modified to N6-(pyridoxal phosphate)lysine. Residue C364 is the Cysteine persulfide intermediate of the active site.

Belongs to the class-V pyridoxal-phosphate-dependent aminotransferase family. Csd subfamily. In terms of assembly, homodimer. Interacts with SufE and the SufBCD complex composed of SufB, SufC and SufD. The interaction with SufE is required to mediate the direct transfer of the sulfur atom from the S-sulfanylcysteine. Requires pyridoxal 5'-phosphate as cofactor.

The protein localises to the cytoplasm. The enzyme catalyses (sulfur carrier)-H + L-cysteine = (sulfur carrier)-SH + L-alanine. It catalyses the reaction L-selenocysteine + AH2 = hydrogenselenide + L-alanine + A + H(+). Its pathway is cofactor biosynthesis; iron-sulfur cluster biosynthesis. In terms of biological role, cysteine desulfurases mobilize the sulfur from L-cysteine to yield L-alanine, an essential step in sulfur metabolism for biosynthesis of a variety of sulfur-containing biomolecules. Component of the suf operon, which is activated and required under specific conditions such as oxidative stress and iron limitation. Acts as a potent selenocysteine lyase in vitro, that mobilizes selenium from L-selenocysteine. Selenocysteine lyase activity is however unsure in vivo. In Yersinia pseudotuberculosis serotype IB (strain PB1/+), this protein is Cysteine desulfurase.